A 1756-amino-acid chain; its full sequence is Periplakin (1756 aa).

The residue at position 14 (serine 14) is a Phosphoserine. 2 coiled-coil regions span residues 16-125 and 188-389; these read TVQT…KQIY and KEQN…QQVV. 4 Spectrin repeats span residues 216–317, 323–485, 505–612, and 733–861; these read QDYM…SHLK, HQFH…RTLQ, RQLL…EKVD, and EHFH…QNLE. The SH3 domain maps to 399–455; that stretch reads LKPIPVEALCDFEGEQGLISRGYSYTLQKNNGESWELMDSAGNKLIAPAVCFVIPPT. Phosphoserine is present on serine 465. Coiled coils occupy residues 585–820 and 886–1645; these read LLRT…GRRS and DSGV…SVAV. 4 positions are modified to phosphoserine: serine 887, serine 949, serine 1584, and serine 1657. The segment at 1557 to 1756 is interacts with BFSP2 and VIM; the sequence is ELDFLREENH…ELAVLVSGQK (200 aa). Plectin repeat units follow at residues 1651–1685 and 1700–1735; these read ENHL…WNMF and VKGP…PAQY.

It belongs to the plakin or cytolinker family. Homodimer or a heterodimer with EVPL. Found in a complex composed of PPL (via C-terminal linker domain), BFSP1 and BFSP2 in the retinal lens. Within the complex interacts (via C-terminal linker domain) with BFSP2. Interacts with VIM. Binds to the PH domain of AKT1. Interacts with FCGR1A. May interact with PPHLN1. Expressed in stratified squamous epithelia and in some other epithelia.

The protein resides in the cell junction. The protein localises to the desmosome. It is found in the cytoplasm. It localises to the cytoskeleton. Its subcellular location is the cell membrane. Functionally, component of the cornified envelope of keratinocytes. May link the cornified envelope to desmosomes and intermediate filaments. May act as a localization signal in PKB/AKT-mediated signaling. The polypeptide is Periplakin (PPL) (Homo sapiens (Human)).